The primary structure comprises 312 residues: Serine/threonine-protein phosphatase PP2A catalytic subunit (312 aa).

4 residues coordinate Mn(2+): D60, H62, D88, and N120. Residue H121 is the Proton donor of the active site. Residues H170 and H244 each contribute to the Mn(2+) site.

It belongs to the PPP phosphatase family. PP-2A subfamily. Mn(2+) serves as cofactor.

The protein resides in the cytoplasm. It carries out the reaction O-phospho-L-seryl-[protein] + H2O = L-seryl-[protein] + phosphate. The catalysed reaction is O-phospho-L-threonyl-[protein] + H2O = L-threonyl-[protein] + phosphate. This is Serine/threonine-protein phosphatase PP2A catalytic subunit from Nicotiana tabacum (Common tobacco).